The chain runs to 103 residues: MSTGVPSGSSAATGSNRRLQQTQNQVDEVVDIMRVNVDKVLERDQKLSELDDRADALQAGASQFETSAAKLKRKYWWKNCKMWAIGISVLVIIVIIIIVWCVS.

The tract at residues Met-1–Gln-25 is disordered. Residues Met-1–Lys-81 are Cytoplasmic-facing. One can recognise a v-SNARE coiled-coil homology domain in the interval Arg-18–Lys-78. Glycyl lysine isopeptide (Lys-Gly) (interchain with G-Cter in ubiquitin) cross-links involve residues Lys-70, Lys-72, and Lys-81. A helical; Anchor for type IV membrane protein transmembrane segment spans residues Met-82–Val-102. Position 103 (Ser-103) is a topological domain, vesicular.

The protein belongs to the synaptobrevin family. In terms of assembly, interacts with POPDC1 (via the C-terminus cytoplasmic tail). Interacts with BCAP31; involved in VAMP3 export from the endoplasmic reticulum. Interacts with BAIAP3; this interaction is increased in the presence of calcium. Interacts with PICALM. Post-translationally, ubiquitinated by RNF167 at Lys-70, Lys-72 and Lys-81, regulating the recycling endosome pathway. (Microbial infection) Targeted and hydrolyzed by C.botulinum neurotoxin type D (BoNT/D, botD) which hydrolyzes the 46-Lys-|-Leu-47 bond and probably inhibits neurotransmitter release. In terms of processing, (Microbial infection) Targeted and hydrolyzed by C.botulinum neurotoxin type F (BoNT/F, botF) which hydrolyzes the 45-Gln-|-Lys-46 bond and probably inhibits neurotransmitter release. Post-translationally, (Microbial infection) Targeted and hydrolyzed by C.tetani toxin (tetX) which hydrolyzes the 63-Gln-|-Phe-64 bond and probably inhibits neurotransmitter release. In terms of tissue distribution, ubiquitous.

It is found in the early endosome membrane. The protein localises to the recycling endosome membrane. The protein resides in the synapse. It localises to the synaptosome. SNARE involved in vesicular transport from the late endosomes to the trans-Golgi network. This is Vesicle-associated membrane protein 3 (Vamp3) from Rattus norvegicus (Rat).